The chain runs to 769 residues: TSC22 domain family protein 2 (769 aa).

Disordered regions lie at residues 20–86, 224–292, 334–353, and 520–563; these read AQVA…TVSP, HGLD…PQPM, AQPG…YPQP, and VPAP…SLPQ. The span at 28-37 shows a compositional bias: acidic residues; it reads EDTESLDDPD. Residues 229–252 are compositionally biased toward polar residues; the sequence is GTDSSLTAVSQLPPSEKMSQPTLA. Low complexity predominate over residues 269 to 279; sequence GGAVAPSSASL. Residues 531–541 show a composition bias toward low complexity; the sequence is SSHTPVSRSSS. Over residues 542-563 the composition is skewed to polar residues; it reads VIQQVGSPLAQGTHSAPTSLPQ. Positions 691-725 form a coiled coil; that stretch reads MYAVREEVEVLKEQIKELVERNSLLERENALLKSL. Residues 726-745 show a composition bias toward polar residues; the sequence is SNNDQLSQLPAQQANPGSTS. Residues 726-769 form a disordered region; it reads SNNDQLSQLPAQQANPGSTSQQQAMIAQPPQPTQPPQQPNVSSA. Over residues 754–763 the composition is skewed to pro residues; it reads PPQPTQPPQQ.

It belongs to the TSC-22/Dip/Bun family. In terms of assembly, interacts with NRBP1. Interacts with PKM isoform M2; the interaction results in reduced nuclear levels of PKM isoform M2, leading to repression of cyclin CCND1 transcription and reduced cell growth. Interacts with WDR77. Expressed in the cortex, medulla and papilla of the kidney. In terms of tissue distribution, expressed in the kidney.

In terms of biological role, reduces the level of nuclear PKM isoform M2 which results in repression of cyclin CCND1 transcription and reduced cell growth. Functionally, may protect kidney cells from hyperosmotic stress. The chain is TSC22 domain family protein 2 from Mus musculus (Mouse).